Reading from the N-terminus, the 954-residue chain is Chromosomal passenger complex protein BIR1 (954 aa).

BIR repeat units lie at residues 20 to 117 and 153 to 241; these read RLRT…LLIY and RKFT…YFFQ. Zn(2+) contacts are provided by Cys208, Cys211, His228, and Cys237. The interval 375–419 is disordered; the sequence is NVQLTQSSSPIKKKRKFKRISPRKIFDEEDSEHSLNNNSANGDNK. The segment covering 385-396 has biased composition (basic residues); the sequence is IKKKRKFKRISP. Residues Ser477, Ser508, and Ser552 each carry the phosphoserine modification. 2 disordered regions span residues 541–645 and 661–685; these read DIDR…SGKV and FSASDFSPSSQSEQSSKSSSVISTP. A compositionally biased stretch (basic and acidic residues) spans 556 to 583; sequence PKTHELIRDNSEKREAQNGEFRHQKDST. Ser587 carries the phosphoserine modification. Over residues 593–604 the composition is skewed to polar residues; sequence SNKSGDNSSNIT. A phosphoserine mark is found at Ser751 and Ser765. A disordered region spans residues 798–839; the sequence is LVSGTSSYPRNSRLEEQRKETSTSLADNSKKGSSFNEGNNEK. Residues 809–818 are compositionally biased toward basic and acidic residues; that stretch reads SRLEEQRKET. Over residues 819-835 the composition is skewed to polar residues; sequence STSLADNSKKGSSFNEG.

As to quaternary structure, component of the CPC complex at least composed of IPL1, BIR1 and SLI15. Interacts with CBF2/NDC10. Interacts with CBF3D/SKP1.

Functionally, component of the chromosomal passenger complex (CPC), a complex that acts as a key regulator of chromosome segregation and cytokinesis. The polypeptide is Chromosomal passenger complex protein BIR1 (BIR1) (Saccharomyces cerevisiae (strain ATCC 204508 / S288c) (Baker's yeast)).